Consider the following 49-residue polypeptide: MKVLSSLKEAKNRHRDCQIVKRRGRIYVICKSNPRFKARQGGAKNRNKG.

It belongs to the bacterial ribosomal protein bL36 family.

The polypeptide is Large ribosomal subunit protein bL36 (Pseudomonas fluorescens (strain ATCC BAA-477 / NRRL B-23932 / Pf-5)).